A 297-amino-acid chain; its full sequence is Guanylate kinase (297 aa).

In terms of domain architecture, Guanylate kinase-like spans 5 to 184 (GKVIIISGPS…AVSKITDILI (180 aa)). 12–19 (GPSGVGKG) contributes to the ATP binding site. The tract at residues 205–297 (ENIVDQKYTY…IKQRSDFSGD (93 aa)) is unknown.

The protein belongs to the guanylate kinase family.

Its subcellular location is the cytoplasm. The enzyme catalyses GMP + ATP = GDP + ADP. Its function is as follows. Essential for recycling GMP and indirectly, cGMP. The sequence is that of Guanylate kinase (gmk) from Mesoplasma florum (strain ATCC 33453 / NBRC 100688 / NCTC 11704 / L1) (Acholeplasma florum).